Here is a 327-residue protein sequence, read N- to C-terminus: MRPRIIVFLFQVLVVIKGTKLKYYNDELCGRQSTYTSFMLTDAAGNTGNPTHLAPWAVQIRVKARKGDFEVICGGTLITLKHVLTAAHCFQKHFGAKKEGGEENSMSGRYCESNQRFTDSEILTRTVVTVGAMCTRLEQKYGCVNEKQNGKTLKISRFAIGDFYKTHCEQGNDIVILELESTIDDVEGANYACLPFLPEVNIQSGANVTSFGWGSDPGKGFDNAAFPMIQVLTLATETLATCEENWGTSIPFDSFCTAEEEDKNVCSGDSGGGLTFHQSDSAREFIIAIVSYGSDCVQLIGGSEPRSQINTDVRKHQKFIVNFINQA.

An N-terminal signal peptide occupies residues 1 to 21 (MRPRIIVFLFQVLVVIKGTKL). The region spanning 43–327 (AAGNTGNPTH…KFIVNFINQA (285 aa)) is the Peptidase S1 domain. The cysteines at positions 73 and 89 are disulfide-linked. Active-site charge relay system residues include His-88 and Asp-173. Asn-207 is a glycosylation site (N-linked (GlcNAc...) asparagine). Disulfide bonds link Cys-242-Cys-256 and Cys-266-Cys-296. Residue Ser-270 is the Charge relay system of the active site.

This sequence belongs to the peptidase S1 family. In terms of tissue distribution, specifically expressed in the male gonad including the seminal vesicle, the valve region and the vas deferens.

The protein resides in the secreted. Its subcellular location is the cytoplasmic vesicle. It localises to the secretory vesicle lumen. With respect to regulation, in the male gonad, probably maintained inactive by swm-1. Its function is as follows. Serine protease which, in males, acts as a promoting signal during mating to activate sperm. This is Trypsin-like protease try-5 from Caenorhabditis elegans.